The following is a 390-amino-acid chain: MSPRSTLRSPLPSRTARSSASSDTPSPGADRQDRMSKAKELFVLCDKEGKGFITKRDMQRLQQELPLSPEQLESVFESLDRDRNGYLTPLEFHTGLGELVGSGPEEKVRSAGEIVGEEREEPTEIRFTQILMELGADKLFKDQWELCGLWCELQRDKPELLGVLEEVLSYTVSHLQDALKEKDNLEHALRRREEDHDRVVRSMYEDMESQLKEERERRQALDSMRQGDKKEQLLHELRTREQELEFTLTKQRELESRINSLSSDQADARGENRRLQNVNQQLQDQLEQSREELQNSLSQLQQLQNTIKLQQRGKEREVLKVSRNMQKERESLVRQLELLRDMNKRLRDDKDAHQAQKMVSQKHSFTPPTYYPACRCVHNFSPWPRSIYPY.

Over residues 1–27 the composition is skewed to low complexity; sequence MSPRSTLRSPLPSRTARSSASSDTPSP. The disordered stretch occupies residues 1 to 37; the sequence is MSPRSTLRSPLPSRTARSSASSDTPSPGADRQDRMSK. 2 EF-hand domains span residues 33 to 66 and 67 to 102; these read DRMSKAKELFVLCDKEGKGFITKRDMQRLQQELP and LSPEQLESVFESLDRDRNGYLTPLEFHTGLGELVGS. Residues aspartate 80, aspartate 82, asparagine 84, tyrosine 86, and glutamate 91 each coordinate Ca(2+). Positions 173–357 form a coiled coil; that stretch reads SHLQDALKEK…DDKDAHQAQK (185 aa). Positions 206-234 are disordered; it reads DMESQLKEERERRQALDSMRQGDKKEQLL.

It belongs to the EFCAB4 family.

This chain is EF-hand calcium-binding domain-containing protein 4A (cracr2b), found in Danio rerio (Zebrafish).